Reading from the N-terminus, the 68-residue chain is Large ribosomal subunit protein bL31 (68 aa).

Zn(2+) contacts are provided by cysteine 17, cysteine 19, cysteine 37, and cysteine 40.

Belongs to the bacterial ribosomal protein bL31 family. Type A subfamily. In terms of assembly, part of the 50S ribosomal subunit. Zn(2+) serves as cofactor.

Its function is as follows. Binds the 23S rRNA. The protein is Large ribosomal subunit protein bL31 of Clostridium perfringens (strain ATCC 13124 / DSM 756 / JCM 1290 / NCIMB 6125 / NCTC 8237 / Type A).